A 205-amino-acid chain; its full sequence is Type III pantothenate kinase (205 aa).

Aspartate 5–histidine 12 is an ATP binding site. Substrate contacts are provided by residues tyrosine 68 and glycine 72–arginine 75. Residue aspartate 74 is the Proton acceptor of the active site. Aspartate 89 contacts K(+). Serine 92 is a binding site for ATP. Substrate is bound at residue serine 144.

This sequence belongs to the type III pantothenate kinase family. As to quaternary structure, homodimer. Requires NH4(+) as cofactor. The cofactor is K(+).

Its subcellular location is the cytoplasm. It catalyses the reaction (R)-pantothenate + ATP = (R)-4'-phosphopantothenate + ADP + H(+). Its pathway is cofactor biosynthesis; coenzyme A biosynthesis; CoA from (R)-pantothenate: step 1/5. Functionally, catalyzes the phosphorylation of pantothenate (Pan), the first step in CoA biosynthesis. The chain is Type III pantothenate kinase from Sulfurimonas denitrificans (strain ATCC 33889 / DSM 1251) (Thiomicrospira denitrificans (strain ATCC 33889 / DSM 1251)).